Here is a 312-residue protein sequence, read N- to C-terminus: Undecaprenyl-diphosphatase (312 aa).

The next 7 membrane-spanning stretches (helical) occupy residues 74 to 94 (GVAF…WYFW), 122 to 142 (VSIG…KVFI), 154 to 174 (VAIA…ERIG), 183 to 203 (LDIR…IPGV), 226 to 246 (FSFL…LKTL), 254 to 274 (VGLV…YIAI), and 288 to 308 (IFIW…ISGV).

This sequence belongs to the UppP family.

It is found in the cell inner membrane. It carries out the reaction di-trans,octa-cis-undecaprenyl diphosphate + H2O = di-trans,octa-cis-undecaprenyl phosphate + phosphate + H(+). Catalyzes the dephosphorylation of undecaprenyl diphosphate (UPP). Confers resistance to bacitracin. The protein is Undecaprenyl-diphosphatase of Trichodesmium erythraeum (strain IMS101).